A 59-amino-acid chain; its full sequence is U17-myrmicitoxin-Tb1f (59 aa).

The N-terminal stretch at 1–27 (MEKNRTTTFSVYLTIILFLISTFITMV) is a signal peptide. Positions 28–31 (ITES) are excised as a propeptide. His58 is subject to Histidine amide.

In terms of tissue distribution, expressed by the venom gland.

The protein resides in the secreted. The polypeptide is U17-myrmicitoxin-Tb1f (Tetramorium bicarinatum (Tramp ant)).